A 639-amino-acid chain; its full sequence is MSKVIGIDLGTTNSCVAIMEGGEPIVIANSEGSRTTPSMVAFTEAGERIVGQQAKRQAVTNPENTLFAIKRLIGRKFETEAVKKDIAISPFKIVKADNGDAWVDVRDKKYSPPEISAIILQKMKKTAEDYLGETVTDAVITVPAYFDDSQRQATKDAGKIAGLNVLRIINEPTAAALAYGLDKKKDEKIAVFDLGGGTFDVSVLELGDGVFEVKSTNGDTFLGGEDFDQKIIDWIADEFKKDQGIDLRGDKMALQRLKEAAEKAKCELSGSMETDINLPFITADASGPKHLNLKLSRAKLESLCDDLLRKLEGPCRTAMKDAGLTASEIDEVILVGGMTRMPAVVQRVQEIFGKVPNKGVNPDEVVAIGAGIQGGVLKGDVKDVLLLDVTPLSLGIETLGGVLTRLIEKNTTIPCRKSQTFSTAADNQPAVSIHVLQGEREMARDNKTLGNFELTGIPPAPRGVPQIEVTFDIDANGIVHVSAKDLGTGKEQSIRITASSGLSKEEIDKMVKDAESHAAEDKKKREAIEARNQADSMIYSTEKSLKEVGDKVDAVEKGTIENKIADLKKVMDSDDAEVIKKATDELAQAAHKLAEAMYAQAQQAPGADSCGGDCGQQQEAGAKPKDEKVVDADFEEVKK.

Thr198 bears the Phosphothreonine; by autocatalysis mark. Positions 601–639 (AQQAPGADSCGGDCGQQQEAGAKPKDEKVVDADFEEVKK) are disordered. The segment covering 622–639 (AKPKDEKVVDADFEEVKK) has biased composition (basic and acidic residues).

The protein belongs to the heat shock protein 70 family.

Functionally, acts as a chaperone. The chain is Chaperone protein DnaK from Trichlorobacter lovleyi (strain ATCC BAA-1151 / DSM 17278 / SZ) (Geobacter lovleyi).